Reading from the N-terminus, the 143-residue chain is Large ribosomal subunit protein uL15 (143 aa).

The tract at residues 1-51 (MRLNSIAPAPGSRPSAKRVGRGIGSGLGKTAGRGHKGQKARAGGYHKVGFE) is disordered. Over residues 21–31 (RGIGSGLGKTA) the composition is skewed to gly residues.

Belongs to the universal ribosomal protein uL15 family. As to quaternary structure, part of the 50S ribosomal subunit.

Binds to the 23S rRNA. The sequence is that of Large ribosomal subunit protein uL15 from Thioalkalivibrio sulfidiphilus (strain HL-EbGR7).